A 455-amino-acid chain; its full sequence is Protein king tubby (455 aa).

Residues 35–92 (RPMSGMRGNSRELHAYDGPMQFIGSPHNPDQILSNNSSSVHLSSSMNSSRNNSNNLRS) form a disordered region. Residues 67–92 (LSNNSSSVHLSSSMNSSRNNSNNLRS) are compositionally biased toward low complexity. Serine 144 bears the Phosphoserine mark.

Belongs to the TUB family.

It is found in the cytoplasm. It localises to the nucleus. The protein localises to the cell projection. The protein resides in the cilium membrane. Its subcellular location is the rhabdomere. The sequence is that of Protein king tubby from Drosophila virilis (Fruit fly).